The sequence spans 255 residues: MVQQLALFSAIEDESYPLSVETLTILSSNRPRLFANFNKIYKPNPSLQIEKVNAKNQLVEQTRVKLSTAVPLSKLGNGAELNYHFMEKLSNDDIESFNVKSYIQDIDSNNKTNWAFQISDIPAAGNNRKLSSQTIHESVIQSSSGSVSSFIDELGYVNDFQYINVGVKFQFLSGVVMEIYKVWQVVQKDQEVSMKLITKDGFMIKAMYNVNKSTDIESLNNGSQLLLKLKTDLRDYIELDIPDRKCMDTRLNHLD.

The protein belongs to the Mediator complex subunit 18 family. In terms of assembly, component of the Mediator complex.

Its subcellular location is the nucleus. In terms of biological role, component of the Mediator complex, a coactivator involved in the regulated transcription of nearly all RNA polymerase II-dependent genes. Mediator functions as a bridge to convey information from gene-specific regulatory proteins to the basal RNA polymerase II transcription machinery. Mediator is recruited to promoters by direct interactions with regulatory proteins and serves as a scaffold for the assembly of a functional preinitiation complex with RNA polymerase II and the general transcription factors. The protein is Mediator of RNA polymerase II transcription subunit 18 (SRB5) of Kluyveromyces lactis (strain ATCC 8585 / CBS 2359 / DSM 70799 / NBRC 1267 / NRRL Y-1140 / WM37) (Yeast).